The chain runs to 183 residues: uncharacterized protein (183 aa).

Disordered regions lie at residues 1-44 (MPFY…VMTA), 68-137 (GRAG…LGLR), and 163-183 (RDDP…VWPE).

This is an uncharacterized protein from Dryophytes versicolor (chameleon treefrog).